A 791-amino-acid chain; its full sequence is Phenylalanine--tRNA ligase beta subunit (791 aa).

Positions 39–148 (AADFSGVVVA…ADAPVGADIR (110 aa)) constitute a tRNA-binding domain. The B5 domain maps to 401–476 (PLRAPVRLRE…RVYGYDAIPR (76 aa)). Mg(2+)-binding residues include Asp454, Asp460, Glu463, and Glu464. The 94-residue stretch at 697–790 (SRFPLVRRDL…LAADFGAKLR (94 aa)) folds into the FDX-ACB domain.

The protein belongs to the phenylalanyl-tRNA synthetase beta subunit family. Type 1 subfamily. In terms of assembly, tetramer of two alpha and two beta subunits. Mg(2+) is required as a cofactor.

It localises to the cytoplasm. The enzyme catalyses tRNA(Phe) + L-phenylalanine + ATP = L-phenylalanyl-tRNA(Phe) + AMP + diphosphate + H(+). The polypeptide is Phenylalanine--tRNA ligase beta subunit (Methylococcus capsulatus (strain ATCC 33009 / NCIMB 11132 / Bath)).